Reading from the N-terminus, the 304-residue chain is MTKKILILSGGISKERLISLDTGKQVAKELIKNGYKVLISEPDKNLSKNITSFKPDVIFNALHGQFGEDGYIQAILETKKIPYTHSGVIASSIAMDKEISKKIFIKNKILTPKYIKFNHKKNKLNIIKLIEKNLKFPVVVKPINEGSSVHVYICDKTNILKNLKVLKSYNEILIEEFIPGREIQVAIMNNKSLGAIELEPRRKFYDYEAKYNSSAKTKHLIPVDLSKNNLAKITGIARAAHKIIGCKGVTRSDFKFFNGKFYLLEINTQPGMTKLSLVPEIAKHKGISFIKLIEWILKDASINR.

The ATP-grasp domain maps to lysine 101 to lysine 298. Glutamate 131–glutamine 184 serves as a coordination point for ATP. The Mg(2+) site is built by aspartate 253, glutamate 265, and asparagine 267.

This sequence belongs to the D-alanine--D-alanine ligase family. Mg(2+) serves as cofactor. The cofactor is Mn(2+).

It localises to the cytoplasm. The enzyme catalyses 2 D-alanine + ATP = D-alanyl-D-alanine + ADP + phosphate + H(+). It participates in cell wall biogenesis; peptidoglycan biosynthesis. Its function is as follows. Cell wall formation. The sequence is that of D-alanine--D-alanine ligase from Pelagibacter ubique (strain HTCC1062).